A 405-amino-acid chain; its full sequence is L-carnitine CoA-transferase (405 aa).

2 residues coordinate CoA: lysine 97 and arginine 104. The Nucleophile role is filled by aspartate 169.

This sequence belongs to the CoA-transferase III family. CaiB subfamily. In terms of assembly, homodimer.

The protein localises to the cytoplasm. It carries out the reaction crotonobetainyl-CoA + (R)-carnitine = crotonobetaine + (R)-carnitinyl-CoA. The enzyme catalyses 4-(trimethylamino)butanoyl-CoA + (R)-carnitine = (R)-carnitinyl-CoA + 4-(trimethylamino)butanoate. Its pathway is amine and polyamine metabolism; carnitine metabolism. In terms of biological role, catalyzes the reversible transfer of the CoA moiety from gamma-butyrobetainyl-CoA to L-carnitine to generate L-carnitinyl-CoA and gamma-butyrobetaine. Is also able to catalyze the reversible transfer of the CoA moiety from gamma-butyrobetainyl-CoA or L-carnitinyl-CoA to crotonobetaine to generate crotonobetainyl-CoA. The sequence is that of L-carnitine CoA-transferase (caiB) from Escherichia coli O157:H7.